The primary structure comprises 249 residues: 3-deoxy-manno-octulosonate cytidylyltransferase (249 aa).

The protein belongs to the KdsB family.

It localises to the cytoplasm. The enzyme catalyses 3-deoxy-alpha-D-manno-oct-2-ulosonate + CTP = CMP-3-deoxy-beta-D-manno-octulosonate + diphosphate. It participates in nucleotide-sugar biosynthesis; CMP-3-deoxy-D-manno-octulosonate biosynthesis; CMP-3-deoxy-D-manno-octulosonate from 3-deoxy-D-manno-octulosonate and CTP: step 1/1. The protein operates within bacterial outer membrane biogenesis; lipopolysaccharide biosynthesis. Functionally, activates KDO (a required 8-carbon sugar) for incorporation into bacterial lipopolysaccharide in Gram-negative bacteria. This is 3-deoxy-manno-octulosonate cytidylyltransferase from Photorhabdus laumondii subsp. laumondii (strain DSM 15139 / CIP 105565 / TT01) (Photorhabdus luminescens subsp. laumondii).